A 266-amino-acid chain; its full sequence is Gasdermin bGSDM (266 aa).

Cysteine 4 carries S-palmitoyl cysteine lipidation. The next 4 beta stranded transmembrane spans lie at 69 to 85, 97 to 114, 163 to 180, and 189 to 205; these read INGQKTENLSFSIGINI, AGIEAQYNQARKVRFEFS, EFTVAAEKSGGGSIQLDV, and GKLKVEASVSSQSTVTY. The interval 238–266 is C-terminal region; sequence AMALDAAGGVMPSDSALLDEGGLLDLEGF.

This sequence belongs to the bacterial gasdermin family. Monomer in solution. As to quaternary structure, homooligomer; forms homooligomeric ring-shaped pores when inserted in membranes with 48-54 subunits per ring. Post-translationally, palmitoylation helps stabilize the inactive state; may self palmitoylate. Palmitoylation plays a significant role in pore formation.

The protein resides in the cytoplasm. It is found in the cell inner membrane. Its activity is regulated as follows. The full-length protein before cleavage is inactive: intramolecular interactions between the N-terminal domain and the C-terminal region as well as the lipid modification, mediate autoinhibition. The pyroptosis-like-inducing activity is carried by the released N-terminal domain (Gasdermin bGSDM, N-terminus). Functionally, precursor of a pore-forming protein involved in defense against bacteriophages. Expression of bGSDM and the neighboring protease gene (Ga0334635_1659) is toxic in E.coli. Cleavage of this precursor by its dedicated protease releases the active moiety (gasdermin bGSDM, N-terminus) which inserts into membranes, forming pores and triggering cell death. Its function is as follows. Pore-forming protein that causes membrane permeabilization, probably via a pyroptosis-like activity. Makes ring-like pores with an interior pore diameter of 200-300 Angstroms, when integrated in liposomes. The polypeptide is Gasdermin bGSDM (Vitiosangium sp. (strain GDMCC 1.1324)).